The sequence spans 318 residues: NADH-ubiquinone oxidoreductase chain 1 (318 aa).

8 helical membrane passes run 2-22, 70-90, 102-122, 147-167, 171-191, 222-242, 253-273, and 294-314; these read FLTNLLMTIAPVLLAVAFLTL, MFLMAPTLALALALTMWIPLP, LLFMLAMSSLAVYAILWSGWA, AIILLSVLLLSGSYSLSTLII, YMWLILPSWPLAMMWFISTLA, LFFLAEYTNIIMMNALTTILF, ELYTINFTTKTLLLTMAFLWI, and LPLTLALCMWYTALPIITAAI.

The protein belongs to the complex I subunit 1 family.

It localises to the mitochondrion inner membrane. The catalysed reaction is a ubiquinone + NADH + 5 H(+)(in) = a ubiquinol + NAD(+) + 4 H(+)(out). Its function is as follows. Core subunit of the mitochondrial membrane respiratory chain NADH dehydrogenase (Complex I) that is believed to belong to the minimal assembly required for catalysis. Complex I functions in the transfer of electrons from NADH to the respiratory chain. The immediate electron acceptor for the enzyme is believed to be ubiquinone. The chain is NADH-ubiquinone oxidoreductase chain 1 (MT-ND1) from Diaemus youngi (White-winged vampire bat).